The sequence spans 287 residues: Undecaprenyl-diphosphatase (287 aa).

Transmembrane regions (helical) follow at residues 1-21, 49-69, 101-121, 126-146, 160-180, 203-223, 232-252, and 267-287; these read MALWIAVLLGVVQGIFMFLPV, MILFNLVVHVGTLVSIVVVFA, LFLLGMLSVLFTGVVGLTLKA, VFANPWMIAFTLILTGALLFW, TGVGTATLIGVAQGFALMPGL, YSFFLAIPTICAATLLQAIEV, VSVAALITGFVVAAGVGIVSL, and FSFYVWALAAAILLGWIDLPI.

Belongs to the UppP family.

Its subcellular location is the cell inner membrane. It catalyses the reaction di-trans,octa-cis-undecaprenyl diphosphate + H2O = di-trans,octa-cis-undecaprenyl phosphate + phosphate + H(+). Its function is as follows. Catalyzes the dephosphorylation of undecaprenyl diphosphate (UPP). Confers resistance to bacitracin. The chain is Undecaprenyl-diphosphatase from Halorhodospira halophila (strain DSM 244 / SL1) (Ectothiorhodospira halophila (strain DSM 244 / SL1)).